We begin with the raw amino-acid sequence, 282 residues long: MEKIFLNGEFVSPSEAKVSYNDRGYVFGDGIYEYIRVYNGKLFTVTEHYERFLRSANEIGLDLNYSVEELIELSRKLVDMNQIETGVIYIQATRGVAERNHSFPTPEVEPAIVAYTKSYDRPYDHLENGVNGVTVEDIRWLRCDIKSLNLLGNVLAKEYAVKYNAVEAIQHRGETVTEGSSSNAYAIKDGVIYTHPINNYILNGITRIVIKKIAEDYNIPFKEETFTVDFLRNADEVIVSSTSAEVTPVIKLDGEPVNDGKVGPITRQLQEGFEKYIESHSI.

Y32 provides a ligand contact to substrate. R51 lines the pyridoxal 5'-phosphate pocket. Substrate contacts are provided by R99 and H101. K146 functions as the Proton acceptor in the catalytic mechanism. K146 is modified (N6-(pyridoxal phosphate)lysine). E178 contacts pyridoxal 5'-phosphate.

This sequence belongs to the class-IV pyridoxal-phosphate-dependent aminotransferase family. Homodimer. It depends on pyridoxal 5'-phosphate as a cofactor.

The enzyme catalyses D-alanine + 2-oxoglutarate = D-glutamate + pyruvate. Acts on the D-isomers of alanine, leucine, aspartate, glutamate, aminobutyrate, norvaline and asparagine. The enzyme transfers an amino group from a substrate D-amino acid to the pyridoxal phosphate cofactor to form pyridoxamine and an alpha-keto acid in the first half-reaction. The second half-reaction is the reverse of the first, transferring the amino group from the pyridoxamine to a second alpha-keto acid to form the product D-amino acid via a ping-pong mechanism. This is an important process in the formation of D-alanine and D-glutamate, which are essential bacterial cell wall components. This Staphylococcus aureus (strain MSSA476) protein is D-alanine aminotransferase (dat).